Reading from the N-terminus, the 188-residue chain is Threonylcarbamoyl-AMP synthase (188 aa).

Positions 3-188 constitute a YrdC-like domain; the sequence is QLQPSAVATT…RSGQILRNGS (186 aa).

The protein belongs to the SUA5 family. TsaC subfamily.

It localises to the cytoplasm. It catalyses the reaction L-threonine + hydrogencarbonate + ATP = L-threonylcarbamoyladenylate + diphosphate + H2O. Its function is as follows. Required for the formation of a threonylcarbamoyl group on adenosine at position 37 (t(6)A37) in tRNAs that read codons beginning with adenine. Catalyzes the conversion of L-threonine, HCO(3)(-)/CO(2) and ATP to give threonylcarbamoyl-AMP (TC-AMP) as the acyladenylate intermediate, with the release of diphosphate. The chain is Threonylcarbamoyl-AMP synthase from Shewanella frigidimarina (strain NCIMB 400).